The primary structure comprises 184 residues: UPF0301 protein RHOS4_26140 (184 aa).

This sequence belongs to the UPF0301 (AlgH) family.

The polypeptide is UPF0301 protein RHOS4_26140 (Cereibacter sphaeroides (strain ATCC 17023 / DSM 158 / JCM 6121 / CCUG 31486 / LMG 2827 / NBRC 12203 / NCIMB 8253 / ATH 2.4.1.) (Rhodobacter sphaeroides)).